The following is a 1786-amino-acid chain: MGLLQVFAFGVLALWGTRVCAQEPEFSYGCAEGSCYPATGDLLIGRAQKLSVTSTCGLHKPEPYCIVSHLQEDKKCFICDSRDPYHETLNPDSHLIENVVTTFAPNRLKIWWQSENGVENVTIQLDLEAEFHFTHLIMTFKTFRPAAMLIERSSDFGKAWGVYRYFAYDCESSFPGISTGPMKKVDDIICDSRYSDIEPSTEGEVIFRALDPAFKIEDPYSPRIQNLLKITNLRIKFVKLHTLGDNLLDSRMEIREKYYYAVYDMVVRGNCFCYGHASECAPVDGVNEEVEGMVHGHCMCRHNTKGLNCELCMDFYHDLPWRPAEGRNSNACKKCNCNEHSSSCHFDMAVFLATGNVSGGVCDNCQHNTMGRNCEQCKPFYFQHPERDIRDPNLCEPCTCDPAGSENGGICDGYTDFSVGLIAGQCRCKLHVEGERCDVCKEGFYDLSAEDPYGCKSCACNPLGTIPGGNPCDSETGYCYCKRLVTGQRCDQCLPQHWGLSNDLDGCRPCDCDLGGALNNSCSEDSGQCSCLPHMIGRQCNEVESGYYFTTLDHYIYEAEEANLGPGVIVVERQYIQDRIPSWTGPGFVRVPEGAYLEFFIDNIPYSMEYEILIRYEPQLPDHWEKAVITVQRPGKIPASSRCGNTVPDDDNQVVSLSPGSRYVVLPRPVCFEKGMNYTVRLELPQYTASGSDVESPYTFIDSLVLMPYCKSLDIFTVGGSGDGEVTNSAWETFQRYRCLENSRSVVKTPMTDVCRNIIFSISALIHQTGLACECDPQGSLSSVCDPNGGQCQCRPNVVGRTCNRCAPGTFGFGPNGCKPCDCHLQGSASAFCDAITGQCHCFQGIYARQCDRCLPGYWGFPSCQPCQCNGHALDCDTVTGECLSCQDYTTGHNCERCLAGYYGDPIIGSGDHCRPCPCPDGPDSGRQFARSCYQDPVTLQLACVCDPGYIGSRCDDCASGFFGNPSDFGGSCQPCQCHHNIDTTDPEACDKETGRCLKCLYHTEGDHCQLCQYGYYGDALRQDCRKCVCNYLGTVKEHCNGSDCHCDKATGQCSCLPNVIGQNCDRCAPNTWQLASGTGCGPCNCNAAHSFGPSCNEFTGQCQCMPGFGGRTCSECQELFWGDPDVECRACDCDPRGIETPQCDQSTGQCVCVEGVEGPRCDKCTRGYSGVFPDCTPCHQCFALWDAIIGELTNRTHKFLEKAKALKISGVIGPYRETVDSVEKKVNEIKDILAQSPAAEPLKNIGILFEEAEKLTKDVTEKMAQVEVKLTDTASQSNSTAGELGALQAEAESLDKTVKELAEQLEFIKNSDIQGALDSITKYFQMSLEAEKRVNASTTDPNSTVEQSALTRDRVEDLMLERESPFKEQQEEQARLLDELAGKLQSLDLSAVAQMTCGTPPGADCSESECGGPNCRTDEGEKKCGGPGCGGLVTVAHSAWQKAMDFDRDVLSALAEVEQLSKMVSEAKVRADEAKQNAQDVLLKTNATKEKVDKSNEDLRNLIKQIRNFLTEDSADLDSIEAVANEVLKMEMPSTPQQLQNLTEDIRERVETLSQVEVILQQSAADIARAELLLEEAKRASKSATDVKVTADMVKEALEEAEKAQVAAEKAIKQADEDIQGTQNLLTSIESETAASEETLTNASQRISKLERNVEELKRKAAQNSGEAEYIEKVVYSVKQNADDVKKTLDGELDEKYKKVESLIAQKTEESADARRKAELLQNEAKTLLAQANSKLQLLEDLERKYEDNQKYLEDKAQELVRLEGEVRSLLKDISEKVAVYSTCL.

The N-terminal stretch at 1–21 is a signal peptide; sequence MGLLQVFAFGVLALWGTRVCA. Positions 31 to 270 constitute a Laminin N-terminal domain; it reads AEGSCYPATG…AVYDMVVRGN (240 aa). A glycan (N-linked (GlcNAc...) asparagine) is linked at Asn120. Ser250 is modified (phosphoserine). 19 disulfide bridges follow: Cys271/Cys280, Cys273/Cys298, Cys300/Cys309, Cys312/Cys332, Cys335/Cys344, Cys337/Cys362, Cys365/Cys374, Cys377/Cys395, Cys398/Cys411, Cys400/Cys426, Cys428/Cys437, Cys440/Cys455, Cys458/Cys472, Cys460/Cys479, Cys481/Cys490, Cys493/Cys507, Cys510/Cys522, Cys512/Cys529, and Cys531/Cys540. Laminin EGF-like domains follow at residues 271–334, 335–397, 398–457, and 458–509; these read CFCY…ACKK, CNCN…LCEP, CTCD…GCKS, and CACN…GCRP. N-linked (GlcNAc...) asparagine glycosylation is present at Asn356. Residues 510 to 540 form the Laminin EGF-like 5; truncated domain; sequence CDCDLGGALNNSCSEDSGQCSCLPHMIGRQC. N-linked (GlcNAc...) asparagine glycosylation occurs at Asn519. Positions 549-767 constitute a Laminin IV type B domain; it reads FTTLDHYIYE…IIFSISALIH (219 aa). An N-linked (GlcNAc...) asparagine glycan is attached at Asn677. 32 disulfides stabilise this stretch: Cys773-Cys785, Cys775-Cys792, Cys794-Cys803, Cys806-Cys818, Cys821-Cys833, Cys823-Cys840, Cys842-Cys851, Cys854-Cys864, Cys867-Cys876, Cys869-Cys883, Cys886-Cys895, Cys898-Cys914, Cys917-Cys933, Cys919-Cys944, Cys946-Cys955, Cys958-Cys973, Cys976-Cys990, Cys978-Cys997, Cys1000-Cys1009, Cys1012-Cys1025, Cys1028-Cys1040, Cys1030-Cys1054, Cys1056-Cys1065, Cys1068-Cys1081, Cys1084-Cys1096, Cys1086-Cys1103, Cys1105-Cys1114, Cys1117-Cys1129, Cys1132-Cys1144, Cys1134-Cys1151, Cys1153-Cys1162, and Cys1165-Cys1176. 8 Laminin EGF-like domains span residues 773–820, 821–866, 867–916, 917–975, 976–1027, 1028–1083, 1084–1131, and 1132–1178; these read CECD…GCKP, CDCH…SCQP, CQCN…HCRP, CPCP…SCQP, CQCH…DCRK, CVCN…GCGP, CNCN…ECRA, and CDCD…DCTP. N-linked (GlcNAc...) asparagine glycosylation occurs at Asn1041. The domain II stretch occupies residues 1179-1397; sequence CHQCFALWDA…LDLSAVAQMT (219 aa). Residues Asn1195, Asn1279, Asn1336, and Asn1343 are each glycosylated (N-linked (GlcNAc...) asparagine). A coiled-coil region spans residues 1216-1315; it reads YRETVDSVEK…LEFIKNSDIQ (100 aa). Residues 1368–1388 are a coiled coil; sequence KEQQEEQARLLDELAGKLQSL. The tract at residues 1398-1430 is domain alpha; the sequence is CGTPPGADCSESECGGPNCRTDEGEKKCGGPGC. Positions 1431-1786 are domain I; the sequence is GGLVTVAHSA…EKVAVYSTCL (356 aa). Residues 1448 to 1778 adopt a coiled-coil conformation; that stretch reads DRDVLSALAE…RSLLKDISEK (331 aa). Asn1487 carries N-linked (GlcNAc...) asparagine glycosylation. Ser1496 carries the phosphoserine modification. Residues Asn1542 and Asn1643 are each glycosylated (N-linked (GlcNAc...) asparagine). Ser1666 is subject to Phosphoserine.

As to quaternary structure, laminin is a complex glycoprotein, consisting of three different polypeptide chains (alpha, beta, gamma), which are bound to each other by disulfide bonds into a cross-shaped molecule comprising one long and three short arms with globules at each end. Beta-1 is a subunit of laminin-1 (laminin-111 or EHS laminin), laminin-2 (laminin-211 or merosin), laminin-6 (laminin-311 or K-laminin), laminin-8 (laminin-411), laminin-10 (laminin-511) and laminin-12 (laminin-213). Interacts with ITGB1. In terms of tissue distribution, widely expressed in the embryo. High levels are detected in the cerebellar basement membrane, at postnatal day 7.

Its subcellular location is the secreted. The protein localises to the extracellular space. It localises to the extracellular matrix. The protein resides in the basement membrane. In terms of biological role, binding to cells via a high affinity receptor, laminin is thought to mediate the attachment, migration and organization of cells into tissues during embryonic development by interacting with other extracellular matrix components. Involved in the organization of the laminar architecture of the cerebral cortex. It is probably required for the integrity of the basement membrane/glia limitans that serves as an anchor point for the endfeet of radial glial cells and as a physical barrier to migrating neurons. Radial glial cells play a central role in cerebral cortical development, where they act both as the proliferative unit of the cerebral cortex and a scaffold for neurons migrating toward the pial surface. The sequence is that of Laminin subunit beta-1 (Lamb1) from Mus musculus (Mouse).